Consider the following 524-residue polypeptide: Probable plastidic glucose transporter 1 (524 aa).

The next 12 helical transmembrane spans lie at 88–108 (MANFLFGYHIGVMNGPIVSIA), 122–142 (LVVSIFIAGAFIGSIVAGPLV), 151–171 (FQIFTIPLILGALVSAQAHSL), 179–199 (FLVGLGIGVNTVLVPIYISEV), 208–228 (LGTLCQIGTCLGIIFSLLLGI), 239–259 (TMLYVASMPGFLLALGMQFAV), 320–340 (VAFIGGSLFVLQQFAGINGVL), 357–377 (QASLYVGVTNFAGALCASYLI), 386–406 (LIGSYLGMAVSMFLIVYAVGF), 420–440 (GTLMYIFSFAIGAGPVTGLII), 452–472 (IMGFSFSVHWVSNFLVGLFFL), and 483–503 (VYASFGSVSLLAAAFSHLFTV).

It belongs to the major facilitator superfamily. Sugar transporter (TC 2.A.1.1) family.

The protein resides in the plastid. Its subcellular location is the chloroplast membrane. In terms of biological role, may be involved in the efflux of glucose towards the cytosol. The sequence is that of Probable plastidic glucose transporter 1 from Arabidopsis thaliana (Mouse-ear cress).